The sequence spans 408 residues: Arginine biosynthesis bifunctional protein ArgJ (408 aa).

The substrate site is built by Thr-156, Lys-182, Thr-193, Glu-279, Asn-403, and Ser-408. Residue Thr-193 is the Nucleophile of the active site.

It belongs to the ArgJ family. As to quaternary structure, heterotetramer of two alpha and two beta chains.

Its subcellular location is the cytoplasm. It catalyses the reaction N(2)-acetyl-L-ornithine + L-glutamate = N-acetyl-L-glutamate + L-ornithine. The catalysed reaction is L-glutamate + acetyl-CoA = N-acetyl-L-glutamate + CoA + H(+). It functions in the pathway amino-acid biosynthesis; L-arginine biosynthesis; L-ornithine and N-acetyl-L-glutamate from L-glutamate and N(2)-acetyl-L-ornithine (cyclic): step 1/1. Its pathway is amino-acid biosynthesis; L-arginine biosynthesis; N(2)-acetyl-L-ornithine from L-glutamate: step 1/4. Catalyzes two activities which are involved in the cyclic version of arginine biosynthesis: the synthesis of N-acetylglutamate from glutamate and acetyl-CoA as the acetyl donor, and of ornithine by transacetylation between N(2)-acetylornithine and glutamate. The sequence is that of Arginine biosynthesis bifunctional protein ArgJ from Dechloromonas aromatica (strain RCB).